Consider the following 866-residue polypeptide: Leucine--tRNA ligase (866 aa).

Positions 59 to 69 (PYPSGDLHMGH) match the 'HIGH' region motif. The segment at 393 to 421 (VPVIKTDPQTGEPLLPESAPLESPAETGQ) is disordered. A compositionally biased stretch (low complexity) spans 404–418 (EPLLPESAPLESPAE). A 'KMSKS' region motif is present at residues 628–632 (AMSKS). K631 provides a ligand contact to ATP.

It belongs to the class-I aminoacyl-tRNA synthetase family.

Its subcellular location is the cytoplasm. The enzyme catalyses tRNA(Leu) + L-leucine + ATP = L-leucyl-tRNA(Leu) + AMP + diphosphate. This Leifsonia xyli subsp. xyli (strain CTCB07) protein is Leucine--tRNA ligase.